The sequence spans 308 residues: Rhamnose-binding lectin (308 aa).

The signal sequence occupies residues 1–23 (MMLILKLSLLSLLIATPGLLVSG). SUEL-type lectin domains are found at residues 27–115 (ITCY…SFDC), 123–213 (ICEH…YICT), and 218–308 (VCEG…YACV). N-linked (GlcNAc...) asparagine glycosylation is present at N110.

Homotrimer. In terms of tissue distribution, expressed in eggs, but not in liver.

It localises to the secreted. Functionally, lectin that binds L-rhamnose. Also binds monosaccharides possessing steric similarity to the hydroxyl group orientation at C2 and C4 of the pyranose ring structure of L-rhamnose, such as L-mannose and L-lyxose. The protein is Rhamnose-binding lectin of Silurus asotus (Amur catfish).